We begin with the raw amino-acid sequence, 531 residues long: Pancreatic secretory granule membrane major glycoprotein GP2 (531 aa).

Residues 1–21 (MVGCDLLWLAAASCVLTLVSP) form the signal peptide. Asparagine 33 carries an N-linked (GlcNAc...) asparagine glycan. The interval 34–53 (SSNLDLDCGSPDSPSSGICF) is beta hairpin. Disulfide bonds link cysteine 41–cysteine 52, cysteine 56–cysteine 151, cysteine 79–cysteine 169, cysteine 101–cysteine 139, cysteine 107–cysteine 174, cysteine 132–cysteine 140, cysteine 184–cysteine 194, cysteine 188–cysteine 203, cysteine 205–cysteine 235, cysteine 223–cysteine 314, and cysteine 255–cysteine 278. Residues 54-74 (DPCQNHTVLNDPTRSTENNDS) are D10C. Asparagine 58 and asparagine 72 each carry an N-linked (GlcNAc...) asparagine glycan. In terms of domain architecture, EGF-like spans 180–224 (APKNCEITCRPEEECVFQNNNWSCVCRQDLHVSDSQSLQPLLDCG). Asparagine 200 carries N-linked (GlcNAc...) asparagine glycosylation. The interval 222-315 (DCGDNEIKVK…FRVNVNFQCA (94 aa)) is ZP-N. Residues 222 to 478 (DCGDNEIKVK…PSCSTNRLRS (257 aa)) form the ZP domain. Residues asparagine 256 and asparagine 285 are each glycosylated (N-linked (GlcNAc...) asparagine). The segment at 316 to 339 (YPLDMSVSLETALQPIVSSLTVDV) is flexible ZP-N/ZP-C linker. The segment at 340–351 (DGAGEFNVKMAL) is internal hydrophobic patch (IHP). Residues 340-478 (DGAGEFNVKM…PSCSTNRLRS (139 aa)) are ZP-C. Disulfide bonds link cysteine 395/cysteine 455, cysteine 416/cysteine 471, and cysteine 460/cysteine 467. An external hydrophobic patch (EHP) region spans residues 485–493 (YNRVLDLGP).

In terms of assembly, interacts with SYCN. Interacts with bacterial adhesin fimH. Post-translationally, N-glycosylated. Specifically expressed by M (microfold) cells which are atypical epithelial cells of the intestine.

The protein localises to the zymogen granule membrane. Its subcellular location is the secreted. The protein resides in the cell membrane. It is found in the apical cell membrane. It localises to the membrane raft. The protein localises to the endosome. Functions as an intestinal M-cell transcytotic receptor specific of type-I-piliated bacteria that participates in the mucosal immune response toward these bacteria. At the apical membrane of M-cells it binds fimH, a protein of the bacteria type I pilus tip. Internalizes bound bacteria, like E.coli and S.typhimurium, from the lumen of the intestine and delivers them, through M-cells, to the underlying organized lymphoid follicles where they are captured by antigen-presenting dendritic cells to elicit a mucosal immune response. In Mus musculus (Mouse), this protein is Pancreatic secretory granule membrane major glycoprotein GP2.